A 337-amino-acid chain; its full sequence is Glyceraldehyde-3-phosphate dehydrogenase 1 (337 aa).

Residues 12–13 (RI), D34, and M79 each bind NAD(+). D-glyceraldehyde 3-phosphate is bound by residues 151–153 (SCT), T182, 211–212 (TG), and R234. Catalysis depends on C152, which acts as the Nucleophile. N316 contributes to the NAD(+) binding site.

The protein belongs to the glyceraldehyde-3-phosphate dehydrogenase family. In terms of assembly, homotetramer.

The protein localises to the cytoplasm. The enzyme catalyses D-glyceraldehyde 3-phosphate + phosphate + NAD(+) = (2R)-3-phospho-glyceroyl phosphate + NADH + H(+). Its pathway is carbohydrate degradation; glycolysis; pyruvate from D-glyceraldehyde 3-phosphate: step 1/5. The protein is Glyceraldehyde-3-phosphate dehydrogenase 1 (GAP1) of Giardia intestinalis (Giardia lamblia).